A 111-amino-acid chain; its full sequence is Cytochrome c (111 aa).

Position 1 is an N-acetylalanine (Ala-1). The heme c site is built by Cys-22, Cys-25, and His-26. Lys-80 is subject to N6,N6,N6-trimethyllysine. Met-88 is a heme c binding site. Position 94 is an N6,N6,N6-trimethyllysine (Lys-94).

Belongs to the cytochrome c family. Post-translationally, binds 1 heme c group covalently per subunit.

The protein resides in the mitochondrion intermembrane space. Functionally, electron carrier protein. The oxidized form of the cytochrome c heme group can accept an electron from the heme group of the cytochrome c1 subunit of cytochrome reductase. Cytochrome c then transfers this electron to the cytochrome oxidase complex, the final protein carrier in the mitochondrial electron-transport chain. The sequence is that of Cytochrome c from Gossypium barbadense (Sea Island cotton).